Consider the following 93-residue polypeptide: Large ribosomal subunit protein bL27 (93 aa).

The propeptide occupies 1–9 (MLQLNLQFF). The interval 14-33 (GVGSTKNGRDSISKRLGAKR) is disordered.

It belongs to the bacterial ribosomal protein bL27 family. In terms of processing, the N-terminus is cleaved by ribosomal processing cysteine protease Prp.

This is Large ribosomal subunit protein bL27 from Exiguobacterium sp. (strain ATCC BAA-1283 / AT1b).